The sequence spans 92 residues: Acylphosphatase (92 aa).

A disulfide bond links Cys5 and Cys49. Residues 5–92 (CIIAWIYGRV…SGELTDFRIR (88 aa)) form the Acylphosphatase-like domain. Residues Arg20 and Asn38 contribute to the active site.

It belongs to the acylphosphatase family.

It carries out the reaction an acyl phosphate + H2O = a carboxylate + phosphate + H(+). The sequence is that of Acylphosphatase from Escherichia coli O1:K1 / APEC.